Reading from the N-terminus, the 229-residue chain is MSQPRPLLSPPETEEQLLAQAQQLSGYTLGELAALAGLVTPENLKRDKGWIGVLLEIWLGASAGSKPEQDFAALGVELKTIPVDSLGRPLETTFVCVAPLTGNSGVTWETSHVRHKLKRVLWIPVEGERSIPLAKRRVGSPLLWSPNEEEDQQLREDWEELMDMIVLGQIERITARHGEYLQIRPKAANAKALTEAIGARGERILTLPRGFYLKKNFTSALLARHFLIQ.

It belongs to the MutH family.

The protein localises to the cytoplasm. In terms of biological role, sequence-specific endonuclease that cleaves unmethylated GATC sequences. It is involved in DNA mismatch repair. In Escherichia coli O127:H6 (strain E2348/69 / EPEC), this protein is DNA mismatch repair protein MutH.